We begin with the raw amino-acid sequence, 119 residues long: Large ribosomal subunit protein bL20 (119 aa).

The protein belongs to the bacterial ribosomal protein bL20 family.

Its function is as follows. Binds directly to 23S ribosomal RNA and is necessary for the in vitro assembly process of the 50S ribosomal subunit. It is not involved in the protein synthesizing functions of that subunit. The sequence is that of Large ribosomal subunit protein bL20 from Heliobacterium modesticaldum (strain ATCC 51547 / Ice1).